Consider the following 176-residue polypeptide: 3-hydroxydecanoyl-[acyl-carrier-protein] dehydratase (176 aa).

Residue H71 is part of the active site.

Belongs to the thioester dehydratase family. FabA subfamily. In terms of assembly, homodimer.

The protein resides in the cytoplasm. It carries out the reaction a (3R)-hydroxyacyl-[ACP] = a (2E)-enoyl-[ACP] + H2O. The enzyme catalyses (3R)-hydroxydecanoyl-[ACP] = (2E)-decenoyl-[ACP] + H2O. It catalyses the reaction (2E)-decenoyl-[ACP] = (3Z)-decenoyl-[ACP]. It functions in the pathway lipid metabolism; fatty acid biosynthesis. Necessary for the introduction of cis unsaturation into fatty acids. Catalyzes the dehydration of (3R)-3-hydroxydecanoyl-ACP to E-(2)-decenoyl-ACP and then its isomerization to Z-(3)-decenoyl-ACP. Can catalyze the dehydratase reaction for beta-hydroxyacyl-ACPs with saturated chain lengths up to 16:0, being most active on intermediate chain length. This chain is 3-hydroxydecanoyl-[acyl-carrier-protein] dehydratase, found in Rhodopseudomonas palustris (strain BisB18).